Consider the following 181-residue polypeptide: Protein Syd (181 aa).

The protein belongs to the Syd family.

The protein localises to the cell inner membrane. Interacts with the SecY protein in vivo. May bind preferentially to an uncomplexed state of SecY, thus functioning either as a chelating agent for excess SecY in the cell or as a regulatory factor that negatively controls the translocase function. This Klebsiella pneumoniae (strain 342) protein is Protein Syd.